Reading from the N-terminus, the 229-residue chain is Protein fmp52-2, mitochondrial (229 aa).

Residues Met1–Leu45 constitute a mitochondrion transit peptide.

Belongs to the FMP52 family.

The protein resides in the mitochondrion outer membrane. The chain is Protein fmp52-2, mitochondrial (fmp522) from Aspergillus oryzae (strain ATCC 42149 / RIB 40) (Yellow koji mold).